Here is a 323-residue protein sequence, read N- to C-terminus: Ankyrin repeat and SOCS box protein 11 (323 aa).

ANK repeat units follow at residues Ala64–Leu93, Asn97–Gly126, His130–Leu159, His162–Gln191, His195–His224, and Trp227–Cys256. The SOCS box domain occupies Ser273–Gln323.

The protein belongs to the ankyrin SOCS box (ASB) family. As to quaternary structure, substrate-recognition component of the ECS(ASB11) complex, composed of ASB11, CUL5, ELOB, ELOC and RNF7/RBX2.

The protein localises to the endoplasmic reticulum. The protein operates within protein modification; protein ubiquitination. Functionally, substrate-recognition component of a cullin-5-RING E3 ubiquitin-protein ligase complex (ECS complex, also named CRL5 complex), which mediates the ubiquitination and subsequent proteasomal degradation of target proteins, such as BIK, DIRAS2 and RPN1. The ECS(ASB11) complex acts as a regulator of the endoplasmic reticulum unfolded protein response by mediating ubiquitination and degradation of BIK. This chain is Ankyrin repeat and SOCS box protein 11 (ASB11), found in Bos taurus (Bovine).